A 178-amino-acid polypeptide reads, in one-letter code: ATP-dependent protease subunit HslV (178 aa).

T2 is a catalytic residue. Na(+) is bound by residues S159, C162, and T165.

The protein belongs to the peptidase T1B family. HslV subfamily. As to quaternary structure, a double ring-shaped homohexamer of HslV is capped on each side by a ring-shaped HslU homohexamer. The assembly of the HslU/HslV complex is dependent on binding of ATP.

It is found in the cytoplasm. The enzyme catalyses ATP-dependent cleavage of peptide bonds with broad specificity.. With respect to regulation, allosterically activated by HslU binding. In terms of biological role, protease subunit of a proteasome-like degradation complex believed to be a general protein degrading machinery. This is ATP-dependent protease subunit HslV from Buchnera aphidicola subsp. Cinara cedri (strain Cc).